Consider the following 582-residue polypeptide: TBCC domain-containing protein 1 (582 aa).

Residues 140-153 (EWPSPRSRSPSSSS) are compositionally biased toward low complexity. The disordered stretch occupies residues 140–159 (EWPSPRSRSPSSSSSERDAK). A C-CAP/cofactor C-like domain is found at 305 to 451 (PPGSRLVLMS…LWNQPLLFGV (147 aa)). Residues 547 to 558 (SLLPPTITPSSS) show a composition bias toward low complexity. The segment at 547 to 582 (SLLPPTITPSSSAEHWSSNQNTLKEQTHEQPTGTVC) is disordered. Positions 559–582 (AEHWSSNQNTLKEQTHEQPTGTVC) are enriched in polar residues.

It belongs to the TBCC family.

The protein localises to the cytoplasm. It is found in the cytoskeleton. Its subcellular location is the microtubule organizing center. It localises to the centrosome. The protein resides in the spindle pole. Functionally, may play a role in the regulation of centrosome and Golgi apparatus positioning. This Danio rerio (Zebrafish) protein is TBCC domain-containing protein 1 (tbccd1).